A 274-amino-acid polypeptide reads, in one-letter code: Dehydration-responsive element-binding protein 2A (274 aa).

2 stretches are compositionally biased toward basic and acidic residues: residues 1–10 (MERGEGRRGD) and 35–50 (KWWK…ENSS). Residues 1–75 (MERGEGRRGD…KGGPENSNCA (75 aa)) form a disordered region. The segment at residues 75-132 (AYRGVRQRTWGKWVAEIREPNRGRRLWLGSFPTALEAAHAYDEAARAMYGPTARVNFA) is a DNA-binding region (AP2/ERF).

It belongs to the AP2/ERF transcription factor family. ERF subfamily.

The protein resides in the nucleus. Its function is as follows. Transcriptional activator that binds specifically to the DNA sequence 5'-[AG]CCGAC-3' of the cis-acting dehydration-responsive element (DRE). Binding to the C-repeat/DRE element mediates high salinity- and dehydration-inducible transcription. The sequence is that of Dehydration-responsive element-binding protein 2A (DREB2A) from Oryza sativa subsp. japonica (Rice).